We begin with the raw amino-acid sequence, 307 residues long: MIRVKVPATTANIGPGFDSLGIALQLYNIIEVEEINFGLEINIPVEDQAYIETNEHNLVYQAMKRLFDAVNIHPKGLRINLINNIPIARGLGSSAACIVGGLVVANELLNNPLKKEEIIYLAATMDGHTDNILPAFVGGLTVGSLLEKEVKYVKMDLPTQLKLLAIIPDFHFSTKKARSLLPKNVPIEDAVFNISRVGLLVASLVTSHFENLSEATKDKIHQPYRKDFIPYWEEITSKLMKIGTKGYFLSGSGPTIMGILDGDYKNIEDEMVNFLSHFDQGYKVTVLDVCHNGLEVINDEGSNGCYR.

Residue 86 to 96 (PIARGLGSSAA) coordinates ATP.

Belongs to the GHMP kinase family. Homoserine kinase subfamily.

It localises to the cytoplasm. It carries out the reaction L-homoserine + ATP = O-phospho-L-homoserine + ADP + H(+). It functions in the pathway amino-acid biosynthesis; L-threonine biosynthesis; L-threonine from L-aspartate: step 4/5. Functionally, catalyzes the ATP-dependent phosphorylation of L-homoserine to L-homoserine phosphate. In Petrotoga mobilis (strain DSM 10674 / SJ95), this protein is Homoserine kinase.